The chain runs to 530 residues: NAD(+) kinase (530 aa).

Disordered regions lie at residues 1–27 (MKEN…HNNN), 57–99 (ISSE…KSSN), and 486–530 (SLEA…RFSV). The span at 13 to 25 (WVNEEDGRNDHHN) shows a compositional bias: basic and acidic residues. Residues 59 to 75 (SESSSRRSSLLNKDSSL) show a composition bias toward low complexity. Residues 88–99 (INGTRGSSKSSN) show a composition bias toward polar residues. 2 positions are modified to phosphoserine: Ser-499 and Ser-503. Acidic residues predominate over residues 499–508 (SDDESDDESV).

Belongs to the NAD kinase family. As to quaternary structure, homohexamer.

It catalyses the reaction NAD(+) + ATP = ADP + NADP(+) + H(+). Its function is as follows. Specifically phosphorylates NAD in the presence of ATP, dATP, or CTP as phosphoryl donors. This is NAD(+) kinase (UTR1) from Saccharomyces cerevisiae (strain ATCC 204508 / S288c) (Baker's yeast).